Here is a 719-residue protein sequence, read N- to C-terminus: MSGMGIAILCIVRTKIYRITISFDYSTLMSPFFLFLMMPTTLKDGYRMNSQVNEDAIGINLDLSLPTHISPTTGSESASGSNASTLRNDGNALDGGLLRTSAAISAPTGTSQPTETIGEKLSNEERVNSNVSASNSTTAGTGRMLSQSLTNDSPSNEISTDQLKIFQRMDEMSARMIEMEESFNKLSNKIAEQNTMVLNLKQDNYKVMNKLNILLKLVAQPSARPSTNNAQNKLAIELLNSISAVSSAYLQKMQNNGSGRQHTADLCTGDSNTHSGINQHRTTNGTIDVNTNTAQLNNQFSNALNTILPDQQHNRNNVSQNINQSLPNRQLGPVINTQANQNQSQVLIHNTNTHQQVNRSPISFPNASTDKPFKLNPNGIKRRRRNTQSNNNASTNDHASAAQKPISALSPLTNSHNSTTSMNYTNSSIHSGVTSASNSFHDLNSLNNFGTTTALSLPSLALDNASFPPNQNVIPPIINNTQQPLSFSQLINQDSTTSELLPSGKSGVNTNIVNRNRASTLPSYPKPMTVKSNVDDDGYQEDDDDDGDDEGDGRDNEEDSTAEEDEVDDEIETDMKNASINKRRRSLHHKKSNSLNGRRKLHGESATKPNINSDLHYRILKAPTDVKTIWEEYDTGIRGKPSIKHLEAKYGNKWRLNKNKKTFSRRKRLYKFILNGMERGKTAQEMIETLENKRLYKDDEDGEVKKRTIGWLQESLAGI.

Residues 68–88 show a composition bias toward polar residues; sequence HISPTTGSESASGSNASTLRN. 4 disordered regions span residues 68 to 90, 102 to 159, 353 to 402, and 496 to 610; these read HISP…RNDG, AAIS…NEIS, THQQ…ASAA, and TTSE…TKPN. Residues 117 to 127 are compositionally biased toward basic and acidic residues; it reads IGEKLSNEERV. Positions 128 to 143 are enriched in low complexity; that stretch reads NSNVSASNSTTAGTGR. Polar residues-rich tracts occupy residues 144–159, 353–369, 387–398, and 496–522; these read MLSQ…NEIS, THQQ…NAST, TQSNNNASTNDH, and TTSE…STLP. A phosphoserine mark is found at Ser146 and Ser153. Residues 535-572 show a composition bias toward acidic residues; it reads DDDGYQEDDDDDGDDEGDGRDNEEDSTAEEDEVDDEIE. The span at 581–601 shows a compositional bias: basic residues; the sequence is NKRRRSLHHKKSNSLNGRRKL.

This sequence belongs to the HOT1 family. In terms of assembly, interacts with HOG1. Post-translationally, hyperphosphorylated during acute stress.

It is found in the nucleus. In terms of biological role, required for a complete transcriptional response to osmotic stress, through recruitment of HOG1 followed by pol II recruitment to the promoters of GPD1 and other HOG-dependent genes. The protein is High-osmolarity-induced transcription protein 1 (HOT1) of Saccharomyces cerevisiae (strain ATCC 204508 / S288c) (Baker's yeast).